The following is a 222-amino-acid chain: Deoxyribose-phosphate aldolase (222 aa).

The active-site Proton donor/acceptor is the Asp93. Lys156 acts as the Schiff-base intermediate with acetaldehyde in catalysis. Lys186 functions as the Proton donor/acceptor in the catalytic mechanism.

This sequence belongs to the DeoC/FbaB aldolase family. DeoC type 1 subfamily.

The protein localises to the cytoplasm. It carries out the reaction 2-deoxy-D-ribose 5-phosphate = D-glyceraldehyde 3-phosphate + acetaldehyde. It participates in carbohydrate degradation; 2-deoxy-D-ribose 1-phosphate degradation; D-glyceraldehyde 3-phosphate and acetaldehyde from 2-deoxy-alpha-D-ribose 1-phosphate: step 2/2. Catalyzes a reversible aldol reaction between acetaldehyde and D-glyceraldehyde 3-phosphate to generate 2-deoxy-D-ribose 5-phosphate. In Nocardia farcinica (strain IFM 10152), this protein is Deoxyribose-phosphate aldolase.